An 82-amino-acid polypeptide reads, in one-letter code: Small ribosomal subunit protein bS16 (82 aa).

The protein belongs to the bacterial ribosomal protein bS16 family.

In Vibrio atlanticus (strain LGP32) (Vibrio splendidus (strain Mel32)), this protein is Small ribosomal subunit protein bS16.